The chain runs to 602 residues: Elongation factor 4 (602 aa).

Positions 8–190 (DLIRNFSIVA…AIVHRLPPPK (183 aa)) constitute a tr-type G domain. Residues 20–25 (DHGKST) and 137–140 (NKID) contribute to the GTP site.

This sequence belongs to the TRAFAC class translation factor GTPase superfamily. Classic translation factor GTPase family. LepA subfamily.

It is found in the cell inner membrane. It catalyses the reaction GTP + H2O = GDP + phosphate + H(+). Its function is as follows. Required for accurate and efficient protein synthesis under certain stress conditions. May act as a fidelity factor of the translation reaction, by catalyzing a one-codon backward translocation of tRNAs on improperly translocated ribosomes. Back-translocation proceeds from a post-translocation (POST) complex to a pre-translocation (PRE) complex, thus giving elongation factor G a second chance to translocate the tRNAs correctly. Binds to ribosomes in a GTP-dependent manner. In Cereibacter sphaeroides (strain ATCC 17023 / DSM 158 / JCM 6121 / CCUG 31486 / LMG 2827 / NBRC 12203 / NCIMB 8253 / ATH 2.4.1.) (Rhodobacter sphaeroides), this protein is Elongation factor 4.